Consider the following 115-residue polypeptide: Toxin-like structure LSTX-D1 (115 aa).

A signal peptide spans Met1–Ala22. A propeptide spanning residues Ile23–Arg44 is cleaved from the precursor. 4 cysteine pairs are disulfide-bonded: Cys48–Cys63, Cys55–Cys72, Cys62–Cys87, and Cys74–Cys85.

The protein belongs to the neurotoxin 19 (CSTX) family. 01 subfamily. In terms of tissue distribution, expressed by the venom gland.

The protein localises to the secreted. The sequence is that of Toxin-like structure LSTX-D1 from Lycosa singoriensis (Wolf spider).